Consider the following 1101-residue polypeptide: ATP-dependent DNA helicase mph1 (1101 aa).

Disordered regions lie at residues 22 to 59, 95 to 138, 154 to 231, and 250 to 270; these read PGTSDTVESVQTNNRPAKQSDISISQGNEEDEFQSPDR, LTQP…QYHD, FEEE…TNRP, and SSQRGEQIFSPPEKSEPPTHH. A compositionally biased stretch (polar residues) spans 24 to 48; that stretch reads TSDTVESVQTNNRPAKQSDISISQG. Residues 170–190 show a composition bias toward low complexity; that stretch reads TPARTAAAPCAAPKGTAADVP. Positions 191–202 are enriched in acidic residues; that stretch reads FDLDDIPDDAFD. Residues 209–228 are compositionally biased toward polar residues; the sequence is PPRSTSQATRGPPVQSQFRT. The 169-residue stretch at 296 to 464 folds into the Helicase ATP-binding domain; the sequence is IAQRGLFHNL…AIIDDLGIAK (169 aa). 309–316 provides a ligand contact to ATP; it reads LPTGLGKT. The DEAH box signature appears at 412 to 415; sequence DEAH. Residues 634-808 enclose the Helicase C-terminal domain; it reads YLKQVVLNHF…GTRFTFHDDK (175 aa). 2 disordered regions span residues 824–890 and 991–1067; these read RQID…PTPE and SRDP…QDAF. A compositionally biased stretch (basic residues) spans 842–854; the sequence is RRARPPKRPPKKF.

Belongs to the DEAD box helicase family. DEAH subfamily. FANCM sub-subfamily. In terms of assembly, interacts with the MHF histone-fold complex to form the FANCM-MHF complex.

It localises to the nucleus. It carries out the reaction ATP + H2O = ADP + phosphate + H(+). ATP-dependent DNA helicase involved in DNA damage repair by homologous recombination and in genome maintenance. Capable of unwinding D-loops. Plays a role in limiting crossover recombinants during mitotic DNA double-strand break (DSB) repair. Component of a FANCM-MHF complex which promotes gene conversion at blocked replication forks, probably by reversal of the stalled fork. This Aspergillus fumigatus (strain CBS 144.89 / FGSC A1163 / CEA10) (Neosartorya fumigata) protein is ATP-dependent DNA helicase mph1.